The following is a 122-amino-acid chain: MQKKDRRKSFYRGIRSEKWAAWWLRLKGFRIVARRFKTKSGEIDLIARRGNLVLIVEVKARATLADAMVAVCRMNERRIEAAADIWLAQQKDYSALCVRFDFIAILPWRLPHHIQRFFESHQ.

Belongs to the UPF0102 family.

In Bartonella bacilliformis (strain ATCC 35685 / KC583 / Herrer 020/F12,63), this protein is UPF0102 protein BARBAKC583_1042.